A 314-amino-acid polypeptide reads, in one-letter code: Methionyl-tRNA formyltransferase (314 aa).

113-116 contacts (6S)-5,6,7,8-tetrahydrofolate; sequence SLLP.

Belongs to the Fmt family.

The enzyme catalyses L-methionyl-tRNA(fMet) + (6R)-10-formyltetrahydrofolate = N-formyl-L-methionyl-tRNA(fMet) + (6S)-5,6,7,8-tetrahydrofolate + H(+). In terms of biological role, attaches a formyl group to the free amino group of methionyl-tRNA(fMet). The formyl group appears to play a dual role in the initiator identity of N-formylmethionyl-tRNA by promoting its recognition by IF2 and preventing the misappropriation of this tRNA by the elongation apparatus. This chain is Methionyl-tRNA formyltransferase, found in Pseudomonas aeruginosa (strain UCBPP-PA14).